A 599-amino-acid chain; its full sequence is Elongation factor 4 (599 aa).

The tr-type G domain maps to K4–K185. Residues D16–T21 and N132–D135 each bind GTP.

Belongs to the TRAFAC class translation factor GTPase superfamily. Classic translation factor GTPase family. LepA subfamily.

The protein resides in the cell membrane. It carries out the reaction GTP + H2O = GDP + phosphate + H(+). In terms of biological role, required for accurate and efficient protein synthesis under certain stress conditions. May act as a fidelity factor of the translation reaction, by catalyzing a one-codon backward translocation of tRNAs on improperly translocated ribosomes. Back-translocation proceeds from a post-translocation (POST) complex to a pre-translocation (PRE) complex, thus giving elongation factor G a second chance to translocate the tRNAs correctly. Binds to ribosomes in a GTP-dependent manner. This is Elongation factor 4 from Mycoplasmoides gallisepticum (strain R(low / passage 15 / clone 2)) (Mycoplasma gallisepticum).